The following is a 253-amino-acid chain: Molybdate import ATP-binding protein MolC (253 aa).

In terms of domain architecture, ABC transporter spans 5–229; that stretch reads LSVENLGFYY…NLTALFHLPM (225 aa). 38–45 is an ATP binding site; it reads GQNGCGKS.

It belongs to the ABC transporter superfamily. The complex is composed of two ATP-binding proteins (MolC), two transmembrane proteins (MolB) and a solute-binding protein (MolA).

The protein localises to the cell inner membrane. The enzyme catalyses molybdate(out) + ATP + H2O = molybdate(in) + ADP + phosphate + H(+). With respect to regulation, the MolBCA complex shows a decrease in affinity in the presence of increasing concentrations of substrate and nucleotide. In terms of biological role, part of the ABC transporter complex MolBCA involved in molybdate import. Responsible for energy coupling to the transport system. Functions as a low-affinity molybdate transporter. This is Molybdate import ATP-binding protein MolC from Haemophilus influenzae (strain ATCC 51907 / DSM 11121 / KW20 / Rd).